Consider the following 174-residue polypeptide: Secretory-abundant heat soluble protein 2 (174 aa).

An N-terminal signal peptide occupies residues 1 to 19 (MHRFVLALVVFAGAAIVWA). The tract at residues 30–60 (EWTGKPWMGKWESDPSKDENVEEFKKKLQLP) is SAHS-c1. The segment at 77–105 (YKKGDEYHHKIIINDAHYKNDIVFKLGQE) is SAHS-c2. N-linked (GlcNAc...) asparagine glycosylation is present at Asn-111. The interval 118 to 172 (KYEDKDGALVGSVHYTGTKEQSLDKTINNVFKLEGDHLVKTSTIEGVTMKRHYNK) is SAHS-c3.

The protein belongs to the Secretory-abundant heat soluble protein (SAHS) family.

It is found in the secreted. Functionally, secreted heat soluble protein acting as a molecular shield in water-deficient condition. Tardigrade-specific intrinsically disordered proteins (TDPs) are essential for desiccation tolerance by forming non-crystalline amorphous solids upon desiccation, and this vitrified state mirrors their protective capabilities. This is Secretory-abundant heat soluble protein 2 from Ramazzottius varieornatus (Water bear).